Reading from the N-terminus, the 85-residue chain is Large ribosomal subunit protein bL27 (85 aa).

Residues 1–21 are disordered; that stretch reads MAHKKAGGSTRNGRDSEGKRL.

It belongs to the bacterial ribosomal protein bL27 family.

In Hamiltonella defensa subsp. Acyrthosiphon pisum (strain 5AT), this protein is Large ribosomal subunit protein bL27.